A 965-amino-acid polypeptide reads, in one-letter code: Receptor-like protein 15 (965 aa).

The first 23 residues, 1 to 23, serve as a signal peptide directing secretion; the sequence is MEGKVFLGHNLIWVMLLMGQLHG. Topologically, residues 24–916 are extracellular; sequence YKSCIDEEKI…GVEADESIID (893 aa). 4 N-linked (GlcNAc...) asparagine glycosylation sites follow: Asn57, Asn95, Asn109, and Asn145. LRR repeat units lie at residues 80–102, 103–127, 131–154, 156–179, 180–204, 206–230, 243–267, 268–290, 292–315, 316–341, 342–365, 366–389, 391–415, 417–435, 437–461, 462–485, and 487–512; these read EISFGGLSLKDNSLLNLSLLHPF, EDVRSLNLSSSRCSGLFDDVEGYKS, LRKLEILDLASNKFNNSIFHFLSA, TSLTTLFLRSNNMDGSFPAKELRD, LTNLELLDLSRNRFNGSIPIQELSS, RKLKALDLSGNEFSGSMELQGKFCT, LNNMQELDLSQNKLVGHLPSCLTSL, TGLRVLDLSSNKLTGTVPSSLGS, QSLEYLSLFDNDFEGSFSFGSLAN, LSNLMVLKLCSKSSSLQVLSESSWKP, KFQLSVIALRSCNMEKVPHFLLHQ, KDLRHVDLSDNNISGKLPSWLLAN, TKLKVLLLQNNLFTSFQIPKSAHNL, FLDVSANDFNHLFPENIGW, FPHLRYLNTSKNNFQENLPSSLGNM, NGIQYMDLSRNSFHGNLPRSFVNG, and YSMAILKLSHNKLSGEIFPESTNFTN. The N-linked (GlcNAc...) asparagine glycan is linked to Asn194. N-linked (GlcNAc...) asparagine glycosylation occurs at Asn315. N-linked (GlcNAc...) asparagine glycans are attached at residues Asn377 and Asn389. The N-linked (GlcNAc...) asparagine glycan is linked to Asn444. The N-linked (GlcNAc...) asparagine glycan is linked to Asn509. The LRR 18; degenerate repeat unit spans residues 514-533; that stretch reads LGLFMDNNLFTGKIGQGLRS. 11 LRR repeats span residues 534 to 557, 558 to 582, 584 to 606, 608 to 627, 628 to 652, 654 to 674, 675 to 698, 778 to 801, 802 to 825, 827 to 850, and 851 to 875; these read LINLELLDMSNNNLTGVIPSWIGE, LPSLTALLISDNFLKGDIPMSLFNK, SLQLLDLSANSLSGVIPPQHDSR, GVVLLLQDNKLSGTIPDTLL, ANVEILDLRNNRFSGKIPEFINIQN, SILLLRGNNFTGQIPHQLCGL, SNIQLLDLSNNRLNGTIPSCLSNT, LKLLFGMDLSENELSGEIPVEFGG, LLELRALNLSHNNLSGVIPKSISS, EKMESFDLSFNRLQGRIPSQLTEL, and TSLSVFKVSHNNLSGVIPQGRQFNT. N-linked (GlcNAc...) asparagine glycans are attached at residues Asn546 and Asn581. Asn652, Asn662, Asn688, and Asn697 each carry an N-linked (GlcNAc...) asparagine glycan. N-linked (GlcNAc...) asparagine glycosylation is found at Asn809 and Asn814. Residues Asn862, Asn893, and Asn898 are each glycosylated (N-linked (GlcNAc...) asparagine). A helical transmembrane segment spans residues 917–937; the sequence is MVSFYLSFAAAYVTILIGILA. Residues 938–965 are Cytoplasmic-facing; sequence SLSFDSPWSRFWFYKVDAFIKKVRNLLL.

The protein belongs to the RLP family.

The protein resides in the cell membrane. This is Receptor-like protein 15 from Arabidopsis thaliana (Mouse-ear cress).